The sequence spans 89 residues: Small ribosomal subunit protein bS20 (89 aa).

The disordered stretch occupies residues 1–28 (MTLANIKSAKKRAVQSEKSRQHNASQRS).

It belongs to the bacterial ribosomal protein bS20 family.

Binds directly to 16S ribosomal RNA. The chain is Small ribosomal subunit protein bS20 from Mannheimia succiniciproducens (strain KCTC 0769BP / MBEL55E).